Reading from the N-terminus, the 356-residue chain is DNA integrity scanning protein DisA (356 aa).

In terms of domain architecture, DAC spans V11–P149. Residues G78, L96, and T109–S113 contribute to the ATP site.

The protein belongs to the DisA family. In terms of assembly, homooctamer. Mg(2+) is required as a cofactor.

It catalyses the reaction 2 ATP = 3',3'-c-di-AMP + 2 diphosphate. Participates in a DNA-damage check-point. DisA forms globular foci that rapidly scan along the chromosomes searching for lesions. In terms of biological role, also has diadenylate cyclase activity, catalyzing the condensation of 2 ATP molecules into cyclic di-AMP (c-di-AMP). c-di-AMP likely acts as a signaling molecule that may couple DNA integrity with a cellular process. The polypeptide is DNA integrity scanning protein DisA (Corynebacterium efficiens (strain DSM 44549 / YS-314 / AJ 12310 / JCM 11189 / NBRC 100395)).